Here is a 148-residue protein sequence, read N- to C-terminus: 3-hydroxyacyl-[acyl-carrier-protein] dehydratase FabZ (148 aa).

Residue H48 is part of the active site.

This sequence belongs to the thioester dehydratase family. FabZ subfamily.

The protein resides in the cytoplasm. The catalysed reaction is a (3R)-hydroxyacyl-[ACP] = a (2E)-enoyl-[ACP] + H2O. In terms of biological role, involved in unsaturated fatty acids biosynthesis. Catalyzes the dehydration of short chain beta-hydroxyacyl-ACPs and long chain saturated and unsaturated beta-hydroxyacyl-ACPs. This Nitratiruptor sp. (strain SB155-2) protein is 3-hydroxyacyl-[acyl-carrier-protein] dehydratase FabZ.